The sequence spans 347 residues: UPF0284 protein YN1551_0030 (347 aa).

This sequence belongs to the UPF0284 family.

This chain is UPF0284 protein YN1551_0030, found in Saccharolobus islandicus (strain Y.N.15.51 / Yellowstone #2) (Sulfolobus islandicus).